The chain runs to 466 residues: Chromosomal replication initiator protein DnaA (466 aa).

The domain I, interacts with DnaA modulators stretch occupies residues 1–86 (MSLSLWQQCL…EVGTKPVTQT (86 aa)). The segment at 86–129 (TLKTPVHNVVAPTQTTTAQPQRVAPAARSGWDNVPAPAEPTYRS) is domain II. The tract at residues 130–346 (NVNVKHTFDN…GALNRVIANA (217 aa)) is domain III, AAA+ region. Positions 174, 176, 177, and 178 each coordinate ATP. The domain IV, binds dsDNA stretch occupies residues 347–466 (NFTGRAITID…FSNLIRTLSS (120 aa)).

It belongs to the DnaA family. Oligomerizes as a right-handed, spiral filament on DNA at oriC.

The protein localises to the cytoplasm. Its function is as follows. Plays an essential role in the initiation and regulation of chromosomal replication. ATP-DnaA binds to the origin of replication (oriC) to initiate formation of the DNA replication initiation complex once per cell cycle. Binds the DnaA box (a 9 base pair repeat at the origin) and separates the double-stranded (ds)DNA. Forms a right-handed helical filament on oriC DNA; dsDNA binds to the exterior of the filament while single-stranded (ss)DNA is stabiized in the filament's interior. The ATP-DnaA-oriC complex binds and stabilizes one strand of the AT-rich DNA unwinding element (DUE), permitting loading of DNA polymerase. After initiation quickly degrades to an ADP-DnaA complex that is not apt for DNA replication. Binds acidic phospholipids. This Salmonella enteritidis PT4 (strain P125109) protein is Chromosomal replication initiator protein DnaA.